Here is a 585-residue protein sequence, read N- to C-terminus: Epithelial sodium channel subunit gamma (585 aa).

Residues 1-55 (MAPGEKIKAKIKKNLPVTGPQAPTIKELMRWYCLNTNTHGCRRIVVSRGRLRRLL) are Cytoplasmic-facing. The helical transmembrane segment at 56 to 76 (WIGFTLTAVALILWQCALLVF) threads the bilayer. Topologically, residues 77–477 (SFYTVSVSIK…GGQLGLWMSC (401 aa)) are extracellular. 6 disulfides stabilise this stretch: Cys100-Cys219, Cys308-Cys393, Cys330-Cys389, Cys334-Cys385, Cys343-Cys370, and Cys345-Cys359. Residue Asn207 is glycosylated (N-linked (GlcNAc...) asparagine). Asn433 is a glycosylation site (N-linked (GlcNAc...) asparagine). The helical transmembrane segment at 478–498 (SVVCVIEIIEVFFIDFFSIIA) threads the bilayer. At 499 to 585 (RRQWQKAKEW…LTDTQMLDEL (87 aa)) the chain is on the cytoplasmic side. The segment at 513-534 (QAPPCPEAPRSPQGQDNPALDI) is disordered. The PY motif; recruits WW domain-containing proteins and is thereby required for ubiquitination and inhibition of the channel by NEDD4 and NEDD4L signature appears at 559-563 (PPPKY).

This sequence belongs to the amiloride-sensitive sodium channel (TC 1.A.6) family. SCNN1G subfamily. As to quaternary structure, component of the heterotrimeric epithelial sodium channel (ENaC) composed of an alpha/SCNN1A, a beta/SCNN1B and a gamma/SCNN1G subunit. An additional delta/SCNN1D subunit can replace the alpha/SCNN1A subunit to form an alternative channel with specific properties. Interacts with WWP1 (via WW domains). Interacts with WWP2 (via WW domains); inhibits the channel. Interacts with the full-length immature form of PCSK9 (pro-PCSK9); inhibits ENaC by promoting its proteasomal degradation. Interacts with BPIFA1; the interaction is indirect via SCNN1B and inhibits the proteolytic maturation of SCNN1A and SCNN1G and the activation of ENaC. In terms of processing, phosphorylated on serine and threonine residues. Aldosterone and insulin increase the basal level of phosphorylation. Ubiquitinated. Can be ubiquitinated at multiple sites and undergo monoubiquitination and polyubiquitination. Ubiquitination by NEDD4 or NEDD4L inhibits the ENaC channel through endocytosis, intracellular retention and degradation of its individual subunits. Post-translationally, ENaC is activated through the proteolytic maturation of its subunits. Furin cleaves the SCNN1G subunit first, followed by cleavage by prostasin (PRSS8), which results in a stepwise increase in the open probability of the channel due to the release of an inhibitory tract. BPIFA1, which is recruited by the SCNN1B subunit, prevents the proteolytic activation of ENaC. In terms of processing, N-glycosylated. N-linked glycans are processed to complex type during ENaC complex assembly and transport to the plasma membrane.

The protein resides in the apical cell membrane. It carries out the reaction Na(+)(in) = Na(+)(out). Its activity is regulated as follows. Originally identified and characterized by its inhibition by the diuretic drug amiloride. This is one of the three pore-forming subunits of the heterotrimeric epithelial sodium channel (ENaC), a critical regulator of sodium balance and fluid homeostasis. ENaC operates in epithelial tissues, where it mediates the electrodiffusion of sodium ions from extracellular fluid through the apical membrane of cells, with water following osmotically. It plays a key role in maintaining sodium homeostasis through electrogenic sodium reabsorption in the kidneys. Additionally, ENaC is essential for airway surface liquid homeostasis, which is crucial for proper mucus clearance. This chain is Epithelial sodium channel subunit gamma, found in Pan troglodytes (Chimpanzee).